The primary structure comprises 108 residues: FK506-binding protein 1 (108 aa).

The PPIase FKBP-type domain occupies 20-108 (GDNVTIHYVG…KFEVELLKVN (89 aa)).

This sequence belongs to the FKBP-type PPIase family. FKBP1 subfamily.

The protein resides in the cytoplasm. The catalysed reaction is [protein]-peptidylproline (omega=180) = [protein]-peptidylproline (omega=0). Its activity is regulated as follows. Inhibited by both FK506 and rapamycin. Its function is as follows. PPIases accelerate the folding of proteins. It catalyzes the cis-trans isomerization of proline imidic peptide bonds in oligopeptides. The polypeptide is FK506-binding protein 1 (FRR1) (Cryptococcus neoformans var. grubii serotype A (strain H99 / ATCC 208821 / CBS 10515 / FGSC 9487) (Filobasidiella neoformans var. grubii)).